A 224-amino-acid chain; its full sequence is Myogenin (224 aa).

S77 and S79 each carry phosphoserine; by CaMK2G. A bHLH domain is found at 81 to 132; that stretch reads DRRRAATLREKRRLKKVNEAFEALKRSTLLNPNQRLPKVEILRSAIQYIERL. T87 is subject to Phosphothreonine; by CaMK2G.

Homodimer and heterodimer with E12; heterodimerization enhances MYOG DNA-binding and transcriptional activities. Interacts with SMARCA4/BRG1/BAF190A. Interacts (via C-terminal region) with SSRP1 and SUPT16H; the interaction is indicative of an interaction with the FACT complex. Interacts with CSRP3. Post-translationally, phosphorylated by CAMK2G on threonine and serine amino acids in a muscle activity-dependent manner. Phosphorylation of Thr-87 impairs both DNA-binding and trans-activation functions in contracting muscles.

The protein resides in the nucleus. Acts as a transcriptional activator that promotes transcription of muscle-specific target genes and plays a role in muscle differentiation, cell cycle exit and muscle atrophy. Essential for the development of functional embryonic skeletal fiber muscle differentiation. However is dispensable for postnatal skeletal muscle growth; phosphorylation by CAMK2G inhibits its transcriptional activity in respons to muscle activity. Required for the recruitment of the FACT complex to muscle-specific promoter regions, thus promoting gene expression initiation. During terminal myoblast differentiation, plays a role as a strong activator of transcription at loci with an open chromatin structure previously initiated by MYOD1. Together with MYF5 and MYOD1, co-occupies muscle-specific gene promoter core regions during myogenesis. Also cooperates with myocyte-specific enhancer factor MEF2D and BRG1-dependent recruitment of SWI/SNF chromatin-remodeling enzymes to alter chromatin structure at myogenic late gene promoters. Facilitates cell cycle exit during terminal muscle differentiation through the up-regulation of miR-20a expression, which in turn represses genes involved in cell cycle progression. Binds to the E-box containing (E1) promoter region of the miR-20a gene. Also plays a role in preventing reversal of muscle cell differentiation. Contributes to the atrophy-related gene expression in adult denervated muscles. Induces fibroblasts to differentiate into myoblasts. This chain is Myogenin (MYOG), found in Homo sapiens (Human).